A 296-amino-acid polypeptide reads, in one-letter code: uncharacterized protein (296 aa).

The 95-residue stretch at Met1–Phe95 folds into the FAD-binding FR-type domain.

This is an uncharacterized protein from Clostridium beijerinckii (Clostridium MP).